Reading from the N-terminus, the 473-residue chain is Photosystem II CP43 reaction center protein (473 aa).

A propeptide spanning residues 1 to 14 is cleaved from the precursor; that stretch reads MKTLYSLRRFYPVE. Thr15 carries the post-translational modification N-acetylthreonine. The residue at position 15 (Thr15) is a Phosphothreonine. Helical transmembrane passes span 69–93, 134–155, 178–200, 255–275, and 291–312; these read LFEV…PHLA, LLGP…KDRN, KALY…RKIT, KPFA…LSYS, and WFNN…ASQA. Position 367 (Glu367) interacts with [CaMn4O5] cluster. The chain crosses the membrane as a helical span at residues 447–471; it reads RARAAAAGFEKGIDRDFEPALSMTP.

Belongs to the PsbB/PsbC family. PsbC subfamily. As to quaternary structure, PSII is composed of 1 copy each of membrane proteins PsbA, PsbB, PsbC, PsbD, PsbE, PsbF, PsbH, PsbI, PsbJ, PsbK, PsbL, PsbM, PsbT, PsbX, PsbY, PsbZ, Psb30/Ycf12, at least 3 peripheral proteins of the oxygen-evolving complex and a large number of cofactors. It forms dimeric complexes. Requires Binds multiple chlorophylls and provides some of the ligands for the Ca-4Mn-5O cluster of the oxygen-evolving complex. It may also provide a ligand for a Cl- that is required for oxygen evolution. PSII binds additional chlorophylls, carotenoids and specific lipids. as cofactor.

It is found in the plastid. The protein localises to the chloroplast thylakoid membrane. One of the components of the core complex of photosystem II (PSII). It binds chlorophyll and helps catalyze the primary light-induced photochemical processes of PSII. PSII is a light-driven water:plastoquinone oxidoreductase, using light energy to abstract electrons from H(2)O, generating O(2) and a proton gradient subsequently used for ATP formation. The polypeptide is Photosystem II CP43 reaction center protein (Oenothera argillicola (Appalachian evening primrose)).